A 267-amino-acid chain; its full sequence is 2-keto-3-deoxy-L-rhamnonate aldolase (267 aa).

H49 (proton acceptor) is an active-site residue. Q151 serves as a coordination point for substrate. Residue E153 coordinates Mg(2+). The substrate site is built by A178 and D179. D179 serves as a coordination point for Mg(2+).

Belongs to the HpcH/HpaI aldolase family. KDR aldolase subfamily. In terms of assembly, homohexamer. Requires Mg(2+) as cofactor.

It catalyses the reaction 2-dehydro-3-deoxy-L-rhamnonate = (S)-lactaldehyde + pyruvate. Its function is as follows. Catalyzes the reversible retro-aldol cleavage of 2-keto-3-deoxy-L-rhamnonate (KDR) to pyruvate and lactaldehyde. The protein is 2-keto-3-deoxy-L-rhamnonate aldolase of Escherichia coli O6:K15:H31 (strain 536 / UPEC).